The sequence spans 171 residues: Large ribosomal subunit protein uL10 (171 aa).

The protein belongs to the universal ribosomal protein uL10 family. As to quaternary structure, part of the ribosomal stalk of the 50S ribosomal subunit. The N-terminus interacts with L11 and the large rRNA to form the base of the stalk. The C-terminus forms an elongated spine to which L12 dimers bind in a sequential fashion forming a multimeric L10(L12)X complex.

In terms of biological role, forms part of the ribosomal stalk, playing a central role in the interaction of the ribosome with GTP-bound translation factors. This Corynebacterium efficiens (strain DSM 44549 / YS-314 / AJ 12310 / JCM 11189 / NBRC 100395) protein is Large ribosomal subunit protein uL10.